The primary structure comprises 64 residues: Alpha-conotoxin CnIA (64 aa).

The first 21 residues, Met-1 to Ser-21, serve as a signal peptide directing secretion. Positions Phe-22 to Arg-47 are excised as a propeptide. 2 disulfide bridges follow: Cys-51–Cys-56 and Cys-52–Cys-62. Residue Pro-54 is modified to 4-hydroxyproline; in CnIK; partial. A Cysteine amide modification is found at Cys-62.

This sequence belongs to the conotoxin A superfamily. Expressed by the venom duct.

The protein resides in the secreted. In terms of biological role, alpha-conotoxins act on postsynaptic membranes, they bind to the nicotinic acetylcholine receptors (nAChR) and thus inhibit them. CnIA and CnIB block muscular nAChR alpha-1/gamma and alpha-1/delta subunits. This Conus consors (Singed cone) protein is Alpha-conotoxin CnIA.